A 388-amino-acid polypeptide reads, in one-letter code: Chalcone synthase DIV (388 aa).

The active site involves Cys164.

The protein belongs to the thiolase-like superfamily. Chalcone/stilbene synthases family.

The enzyme catalyses (E)-4-coumaroyl-CoA + 3 malonyl-CoA + 3 H(+) = 2',4,4',6'-tetrahydroxychalcone + 3 CO2 + 4 CoA. The protein operates within secondary metabolite biosynthesis; flavonoid biosynthesis. In terms of biological role, the primary product of this enzyme is 4,2',4',6'-tetrahydroxychalcone (also termed naringenin-chalcone or chalcone) which can under specific conditions spontaneously isomerize into naringenin. This is Chalcone synthase DIV (CHS-DIV) from Ipomoea batatas (Sweet potato).